Here is a 30-residue protein sequence, read N- to C-terminus: Varv peptide G (30 aa).

A cross-link (cyclopeptide (Gly-Asn)) is located at residues 1–30; sequence GVPVCGETCFGGTCNTPGCSCDPWPVCSRN. 3 cysteine pairs are disulfide-bonded: Cys-5–Cys-19, Cys-9–Cys-21, and Cys-14–Cys-27.

This is a cyclic peptide.

In terms of biological role, probably participates in a plant defense mechanism. This Viola arvensis (European field pansy) protein is Varv peptide G.